Reading from the N-terminus, the 506-residue chain is Histidine ammonia-lyase (506 aa).

The 5-imidazolinone (Ala-Gly) cross-link spans 142–144 (ASG). Ser143 carries the 2,3-didehydroalanine (Ser) modification.

It belongs to the PAL/histidase family. Contains an active site 4-methylidene-imidazol-5-one (MIO), which is formed autocatalytically by cyclization and dehydration of residues Ala-Ser-Gly.

It is found in the cytoplasm. It catalyses the reaction L-histidine = trans-urocanate + NH4(+). It functions in the pathway amino-acid degradation; L-histidine degradation into L-glutamate; N-formimidoyl-L-glutamate from L-histidine: step 1/3. The chain is Histidine ammonia-lyase from Bacillus cereus (strain ATCC 14579 / DSM 31 / CCUG 7414 / JCM 2152 / NBRC 15305 / NCIMB 9373 / NCTC 2599 / NRRL B-3711).